The chain runs to 1038 residues: Protein transport protein SEC24 A (1038 aa).

Residues M1–R247 form a disordered region. Residues S22–G33 are compositionally biased toward pro residues. Positions 371, 374, 393, and 396 each coordinate Zn(2+). Residues C371–C396 are zinc finger-like.

Belongs to the SEC23/SEC24 family. SEC24 subfamily. In terms of assembly, component of the coat protein complex II (COPII), composed of at least five proteins: the Sec23/24 complex, the Sec13/31 complex and Sar1. Interacts with SEC221, SEC23E/SEC23A, SEC23B, SEC23G/SEC23C and SEC23F/SEC23D. (Microbial infection) Interacts with turnip mosaic virus (TuMV) 6K2 in COPII-coated vesicles. Mainly expressed in pollen, leaves, inflorescences, roots and stems, and, to a lower extent, in cotyledons, petioles and hypocotyls.

It localises to the cytoplasmic vesicle. Its subcellular location is the COPII-coated vesicle membrane. The protein resides in the endoplasmic reticulum membrane. It is found in the golgi apparatus membrane. The protein localises to the cytoplasm. It localises to the cytosol. Its function is as follows. Essential protein. Component of the coat protein complex II (COPII), that covers ER-derived vesicles involved in transport from the endoplasmic reticulum to the Golgi apparatus. COPII is composed of at least five proteins: the SEC23/24 complex, the SEC13/31 complex, and the protein SAR1. Acts in the cytoplasm to promote the transport of secretory, plasma membrane, and vacuolar proteins from the endoplasmic reticulum to the Golgi complex. Involved in maintaining the dynamic identity of organelles of the early secretory pathway. Regulates cell size patterning, and prevents CDKA;1-, DEK1- and ACR4-dependent endoreduplication and giant cells formation in sepals. Required for male gametophytes (pollen grains) development and transmission. (Microbial infection) Contributes to viral systemic infection of turnip mosaic virus (TuMV) by triggering the formation of host endoplasmic reticulum (ER)-derived viral vesicles that carry the viral RNA (vRNA) to plasmodesmata for cell-to-cell viral movement. The sequence is that of Protein transport protein SEC24 A from Arabidopsis thaliana (Mouse-ear cress).